The chain runs to 430 residues: BSD domain-containing protein 1 (430 aa).

Residues serine 92 and serine 166 each carry the phosphoserine modification. The 53-residue stretch at 146-198 (WLSQFCLEEKKGEISELLVGSPSIRALYTKMVPAAVSHSEFWHRYFYKVHQLE) folds into the BSD domain. Disordered regions lie at residues 247-298 (STFP…APEA) and 319-398 (LAVD…WEKD). The segment covering 276–291 (PSESSESISLVTQIAN) has biased composition (polar residues). Basic and acidic residues predominate over residues 350–367 (PPARVETLREEAPTDLRV). Threonine 356 carries the phosphothreonine modification. Polar residues predominate over residues 371–390 (NSDSGKSTPSNNGKKGSSTD). A phosphoserine mark is found at serine 387, serine 388, and serine 418.

The chain is BSD domain-containing protein 1 (BSDC1) from Homo sapiens (Human).